The following is a 194-amino-acid chain: Mitochondrial import inner membrane translocase subunit Tim22 (194 aa).

2 disulfide bridges follow: C69/C141 and C160/C179. Transmembrane regions (helical) follow at residues 74–94 (ALAC…TAGI), 123–143 (MSYA…ECLV), and 170–190 (AGLK…AAID).

It belongs to the Tim17/Tim22/Tim23 family. As to quaternary structure, component of the TIM22 complex, whose core is composed of TIMM22, associated with peripheral protein FXC1/TIMM10B and the 70 kDa heterohexamer. In most cases, the 70 kDa complex is composed of TIMM9 and TIMM10 (TIMM10A or TIMM10B). A small fraction of the 70 kDa complex is composed of TIMM8 (TIMM8A/DDP1 or TIMM8B/DDP2) and TIMM13. The TIM22 complex also contains AGK and TIMM29. Interacts directly with TIMM9, TIMM10A and FXC1/TIMM10B. Interacts (when oxidized) with TIMM29; interaction is direct. Post-translationally, disulfide bonds promote efficient assembly of the TIM22 complex.

Its subcellular location is the mitochondrion inner membrane. Essential core component of the TIM22 complex, a complex that mediates the import and insertion of multi-pass transmembrane proteins into the mitochondrial inner membrane. In the TIM22 complex, it constitutes the voltage-activated and signal-gated channel. Forms a twin-pore translocase that uses the membrane potential as external driving force in 2 voltage-dependent steps. This is Mitochondrial import inner membrane translocase subunit Tim22 (TIMM22) from Bos taurus (Bovine).